We begin with the raw amino-acid sequence, 271 residues long: Methylcorrinoid:tetrahydrofolate methyltransferase (271 aa).

The Pterin-binding domain occupies 1-247; it reads MIIIGEKLNG…GAIFATDALL (247 aa).

This sequence belongs to the vitamin-B12 dependent methionine synthase family. The proline betaine:THF methyl transfer system is composed of two methyltransferases, MtpB and MtqA, and the corrinoid protein MtqC. The L-carnitine:THF methyl transfer system is composed of two methyltransferases, MtcB and MtqA, and the corrinoid protein MtqC.

It carries out the reaction methyl-Co(III)-[quaternary-amine-specific corrinoid protein] + (6S)-5,6,7,8-tetrahydrofolate = Co(I)-[quaternary-amine-specific corrinoid protein] + (6S)-5-methyl-5,6,7,8-tetrahydrofolate + H(+). Involved in the degradation of the quaternary amines L-proline betaine and L-carnitine. Component of a corrinoid-dependent methyltransferase system that transfers a methyl group from L-proline betaine or L-carnitine to tetrahydrofolate (THF), forming methyl-THF, a key intermediate in the Wood-Ljungdahl acetogenesis pathway. MtqA catalyzes the transfer of a methyl group from the methylated corrinoid protein MtqC to THF, forming methyl-THF. The protein is Methylcorrinoid:tetrahydrofolate methyltransferase of Eubacterium limosum.